The primary structure comprises 289 residues: Shikimate dehydrogenase (NADP(+)) (289 aa).

Residues 22-24 (SRS) and Thr69 each bind shikimate. Lys73 serves as the catalytic Proton acceptor. NADP(+) is bound at residue Glu85. Asn94 and Asp109 together coordinate shikimate. NADP(+) contacts are provided by residues 134–138 (GAGGA), 158–163 (NRTLSR), and Ile226. Tyr228 is a shikimate binding site. Gly249 is a binding site for NADP(+).

The protein belongs to the shikimate dehydrogenase family. In terms of assembly, homodimer.

The catalysed reaction is shikimate + NADP(+) = 3-dehydroshikimate + NADPH + H(+). It functions in the pathway metabolic intermediate biosynthesis; chorismate biosynthesis; chorismate from D-erythrose 4-phosphate and phosphoenolpyruvate: step 4/7. Its function is as follows. Involved in the biosynthesis of the chorismate, which leads to the biosynthesis of aromatic amino acids. Catalyzes the reversible NADPH linked reduction of 3-dehydroshikimate (DHSA) to yield shikimate (SA). This chain is Shikimate dehydrogenase (NADP(+)), found in Brucella abortus (strain S19).